The sequence spans 248 residues: Methyl-coenzyme M reductase subunit gamma (248 aa).

A coenzyme M-binding site is contributed by R121.

It belongs to the methyl-coenzyme M reductase gamma subunit family. MCR is a hexamer of two alpha, two beta, and two gamma chains, forming a dimer of heterotrimers. Coenzyme F430 serves as cofactor.

It localises to the cytoplasm. It catalyses the reaction coenzyme B + methyl-coenzyme M = methane + coenzyme M-coenzyme B heterodisulfide. The protein operates within one-carbon metabolism; methyl-coenzyme M reduction; methane from methyl-coenzyme M: step 1/1. In terms of biological role, component of the methyl-coenzyme M reductase (MCR) I that catalyzes the reductive cleavage of methyl-coenzyme M (CoM-S-CH3 or 2-(methylthio)ethanesulfonate) using coenzyme B (CoB or 7-mercaptoheptanoylthreonine phosphate) as reductant which results in the production of methane and the mixed heterodisulfide of CoB and CoM (CoM-S-S-CoB). This is the final step in methanogenesis. The chain is Methyl-coenzyme M reductase subunit gamma (mcrG) from Methanosarcina barkeri (strain Fusaro / DSM 804).